We begin with the raw amino-acid sequence, 279 residues long: MASIVSPLSTKDSLLVTQFRAITGTSSAEAAKYIKRYKHIEAAVDAFYNNEPAPRADPAQERKLGEIWEKFKDPSDPKLIKIDGTMELCEELDIDPGTDAVLFCLAADLGSKATGEWEKAPFVAGIASYPGNIDSLPKLKAYLPTLRKKLVSDPEYFKKVYNHAFQLARGGPQSLTRSLPLDTAIDLWTLFFPPAFNHSPSALSHLPDNSPPQFTQPEFDLWIEFMQQKNKAVSKDTWALLVDFARGIDKDFKEYDEDGAWPSMIDDFVEYVREQKRGQ.

In terms of domain architecture, UBA-like spans 12–48 (DSLLVTQFRAITGTSSAEAAKYIKRYKHIEAAVDAFY). The region spanning 59–273 (AQERKLGEIW…MIDDFVEYVR (215 aa)) is the DCUN1 domain.

May contribute to neddylation of cullin components of SCF-type E3 ubiquitin ligase complexes. Neddylation of cullins play an essential role in the regulation of SCF-type complexes activity. This chain is Defective in cullin neddylation protein 1 (DCN1), found in Cryptococcus neoformans var. neoformans serotype D (strain B-3501A) (Filobasidiella neoformans).